Consider the following 277-residue polypeptide: NH(3)-dependent NAD(+) synthetase (277 aa).

46–53 (GISGGQDS) is a binding site for ATP. Asp52 is a Mg(2+) binding site. Residue Arg141 coordinates deamido-NAD(+). Residue Thr161 coordinates ATP. A Mg(2+)-binding site is contributed by Glu166. Deamido-NAD(+) contacts are provided by Lys174 and Asp181. Lys190 and Thr212 together coordinate ATP. A deamido-NAD(+)-binding site is contributed by 262-263 (HK).

It belongs to the NAD synthetase family. Homodimer.

It catalyses the reaction deamido-NAD(+) + NH4(+) + ATP = AMP + diphosphate + NAD(+) + H(+). Its pathway is cofactor biosynthesis; NAD(+) biosynthesis; NAD(+) from deamido-NAD(+) (ammonia route): step 1/1. In terms of biological role, catalyzes the ATP-dependent amidation of deamido-NAD to form NAD. Uses ammonia as a nitrogen source. The sequence is that of NH(3)-dependent NAD(+) synthetase from Corynebacterium efficiens (strain DSM 44549 / YS-314 / AJ 12310 / JCM 11189 / NBRC 100395).